Here is a 684-residue protein sequence, read N- to C-terminus: Cleavage and polyadenylation specificity factor subunit 3 (684 aa).

S2 is subject to N-acetylserine. Residues H71, H73, D75, H76, H158, and D179 each coordinate Zn(2+). H396 serves as the catalytic Proton donor. H418 contributes to the Zn(2+) binding site. Glycyl lysine isopeptide (Lys-Gly) (interchain with G-Cter in SUMO) cross-links involve residues K462, K465, and K545. S659 is modified (phosphoserine). Phosphothreonine is present on T681.

It belongs to the metallo-beta-lactamase superfamily. RNA-metabolizing metallo-beta-lactamase-like family. CPSF3 subfamily. In terms of assembly, component of the cleavage and polyadenylation specificity factor (CPSF) complex, composed of CPSF1, CPSF2, CPSF3, CPSF4 and FIP1L1. Interacts with CPSF2, CSTF2 and SYMPK. Interacts with TUT1; the interaction is direct and mediates the recruitment of the CPSF complex on the 3'UTR of pre-mRNAs. Interacts with WDR33. Interacts with ZC3H3. It depends on Zn(2+) as a cofactor. Sumoylated on Lys-462, Lys-465 and Lys-545, preferentially by SUMO3.

The protein localises to the nucleus. In terms of biological role, component of the cleavage and polyadenylation specificity factor (CPSF) complex that plays a key role in pre-mRNA 3'-end formation, recognizing the AAUAAA signal sequence and interacting with poly(A) polymerase and other factors to bring about cleavage and poly(A) addition. Has endonuclease activity, and functions as an mRNA 3'-end-processing endonuclease. Also involved in the histone 3'-end pre-mRNA processing. U7 snRNP-dependent protein that induces both the 3'-endoribonucleolytic cleavage of histone pre-mRNAs and acts as a 5' to 3' exonuclease for degrading the subsequent downstream cleavage product (DCP) of mature histone mRNAs. Cleavage occurs after the 5'-ACCCA-3' sequence in the histone pre-mRNA leaving a 3'hydroxyl group on the upstream fragment containing the stem loop (SL) and 5' phosphate on the downstream cleavage product (DCP) starting with CU nucleotides. The U7-dependent 5' to 3' exonuclease activity is processive and degrades the DCP RNA substrate even after complete removal of the U7-binding site. Binds to the downstream cleavage product (DCP) of histone pre-mRNAs and the cleaved DCP RNA substrate in a U7 snRNP dependent manner. Required for entering/progressing through S-phase of the cell cycle. Required for the selective processing of microRNAs (miRNAs) during embryonic stem cell differentiation via its interaction with ISY1. Required for the biogenesis of all miRNAs from the pri-miR-17-92 primary transcript except miR-92a. Only required for the biogenesis of miR-290 and miR-96 from the pri-miR-290-295 and pri-miR-96-183 primary transcripts, respectively. The sequence is that of Cleavage and polyadenylation specificity factor subunit 3 (CPSF3) from Bos taurus (Bovine).